The chain runs to 420 residues: O-methyltransferase opaF (420 aa).

S-adenosyl-L-methionine contacts are provided by residues 262–263, Asp287, and 308–309; these read GG and DL. His328 functions as the Proton acceptor in the catalytic mechanism.

The protein belongs to the class I-like SAM-binding methyltransferase superfamily. Cation-independent O-methyltransferase family.

The protein operates within secondary metabolite biosynthesis. Functionally, O-methyltransferase; part of the gene cluster that mediates the biosynthesis of oxepinamides, derivatives of anthranilyl-containing tripeptides that share an oxepin ring and a fused pyrimidinone moiety. The nonribosomal peptide synthetase (NRPS) opaA assembles the quinazolinone core with D-Phe incorporation. The first adenylation domain (A1) of opaA loads and activates anthranilic acid whereas the second A domain (A2) is for activating of L-Phe, which is then converted to D-form by the E domain. The third A domain (A3) is responsible for L-Ile activation and the terminal condensation domain C3 for cyclization and releasing the NRPS product protuboxepin K. The cytochrome P450 monooxygenase opaB then catalyzes alone the oxepin ring formation to convert protuboxepin K into protuboxepin A. The flavoenzyme opaC installs subsequently one hydroxyl group at the oxepin ring, accompanied by double bond migration, to form 15-epi-oxepinamide E. The epimerase opaE changes the D-Phe residue back to L-form, leading to oxepinamide E, which is further methylated at the hydroxyl group at C-12 by the O-methyltransferase OpaF to yield oxepinamide F. This Aspergillus ustus protein is O-methyltransferase opaF.